The sequence spans 344 residues: Aurora kinase B (344 aa).

Residues 1–22 form a disordered region; that stretch reads MAQKENSYPWPYGRQTAPSGLS. Residue threonine 35 is modified to Phosphothreonine. Residue serine 62 is modified to Phosphoserine. Residue threonine 64 is modified to Phosphothreonine. One can recognise a Protein kinase domain in the interval 77-327; that stretch reads FEIGRPLGKG…LAQVSAHPWV (251 aa). Residues 83–91 and lysine 106 each bind ATP; that span reads LGKGKFGNV. The active-site Proton acceptor is the aspartate 200. Lysine 215 bears the N6-acetyllysine mark. Serine 227 carries the post-translational modification Phosphoserine. Phosphothreonine; by autocatalysis is present on threonine 232.

It belongs to the protein kinase superfamily. Ser/Thr protein kinase family. Aurora subfamily. As to quaternary structure, component of the chromosomal passenger complex (CPC) composed of at least BIRC5/survivin, CDCA8/borealin, INCENP, AURKB or AURKC; predominantly independent AURKB- and AURKC-containing complexes exist. Associates with RACGAP1 during M phase. Interacts with SPDYC; this interaction may be required for proper localization of active, Thr-232-phosphorylated AURKB form during prometaphase and metaphase. Interacts with p53/TP53. Interacts (via the middle kinase domain) with NOC2L (via the N- and C-terminus domains). Interacts with CDCA1. Interacts with EVI5. Interacts with JTB. Interacts with NDC80. Interacts with PSMA3. Interacts with RNF2/RING1B. Interacts with SEPTIN1. Interacts with SIRT2. Interacts with TACC1. Interacts with TTC28. The phosphorylation of Thr-232 requires the binding to INCENP and occurs by means of an autophosphorylation mechanism. Thr-232 phosphorylation is indispensable for the AURKB kinase activity. Post-translationally, acetylated at Lys-215 by KAT5 at kinetochores, increasing AURKB activity and promoting accurate chromosome segregation in mitosis. In terms of processing, ubiquitinated by different BCR (BTB-CUL3-RBX1) E3 ubiquitin ligase complexes. Ubiquitinated by the BCR(KLHL9-KLHL13) E3 ubiquitin ligase complex, ubiquitination leads to removal from mitotic chromosomes and is required for cytokinesis. During anaphase, the BCR(KLHL21) E3 ubiquitin ligase complex recruits the CPC complex from chromosomes to the spindle midzone and mediates the ubiquitination of AURKB. Ubiquitination of AURKB by BCR(KLHL21) E3 ubiquitin ligase complex may not lead to its degradation by the proteasome. Deubiquitinated by USP35; inhibiting CDH1-mediated degradation of AURKB. High level expression seen in the thymus. It is also expressed in the spleen, lung, testis, colon, placenta and fetal liver. Expressed during S and G2/M phase and expression is up-regulated in cancer cells during M phase. In terms of tissue distribution, not expressed in normal liver, high expression in metastatic liver.

It is found in the nucleus. It localises to the chromosome. The protein resides in the centromere. Its subcellular location is the kinetochore. The protein localises to the cytoplasm. It is found in the cytoskeleton. It localises to the spindle. The protein resides in the midbody. It catalyses the reaction L-seryl-[protein] + ATP = O-phospho-L-seryl-[protein] + ADP + H(+). It carries out the reaction L-threonyl-[protein] + ATP = O-phospho-L-threonyl-[protein] + ADP + H(+). With respect to regulation, activity is greatly increased when AURKB is within the CPC complex. In particular, AURKB-phosphorylated INCENP acts as an activator of AURKB. Positive feedback between HASPIN and AURKB contributes to CPC localization. Inhibited by ZM447439. Serine/threonine-protein kinase component of the chromosomal passenger complex (CPC), a complex that acts as a key regulator of mitosis. The CPC complex has essential functions at the centromere in ensuring correct chromosome alignment and segregation and is required for chromatin-induced microtubule stabilization and spindle assembly. Involved in the bipolar attachment of spindle microtubules to kinetochores and is a key regulator for the onset of cytokinesis during mitosis. Required for central/midzone spindle assembly and cleavage furrow formation. Key component of the cytokinesis checkpoint, a process required to delay abscission to prevent both premature resolution of intercellular chromosome bridges and accumulation of DNA damage: phosphorylates CHMP4C, leading to retain abscission-competent VPS4 (VPS4A and/or VPS4B) at the midbody ring until abscission checkpoint signaling is terminated at late cytokinesis. AURKB phosphorylates the CPC complex subunits BIRC5/survivin, CDCA8/borealin and INCENP. Phosphorylation of INCENP leads to increased AURKB activity. Other known AURKB substrates involved in centromeric functions and mitosis are CENPA, DES/desmin, GPAF, KIF2C, NSUN2, RACGAP1, SEPTIN1, VIM/vimentin, HASPIN, and histone H3. A positive feedback loop involving HASPIN and AURKB contributes to localization of CPC to centromeres. Phosphorylation of VIM controls vimentin filament segregation in cytokinetic process, whereas histone H3 is phosphorylated at 'Ser-10' and 'Ser-28' during mitosis (H3S10ph and H3S28ph, respectively). AURKB is also required for kinetochore localization of BUB1 and SGO1. Phosphorylation of p53/TP53 negatively regulates its transcriptional activity. Key regulator of active promoters in resting B- and T-lymphocytes: acts by mediating phosphorylation of H3S28ph at active promoters in resting B-cells, inhibiting RNF2/RING1B-mediated ubiquitination of histone H2A and enhancing binding and activity of the USP16 deubiquitinase at transcribed genes. Acts as an inhibitor of CGAS during mitosis: catalyzes phosphorylation of the N-terminus of CGAS during the G2-M transition, blocking CGAS liquid phase separation and activation, and thereby preventing CGAS-induced autoimmunity. Phosphorylates KRT5 during anaphase and telophase. Phosphorylates ATXN10 which promotes phosphorylation of ATXN10 by PLK1 and may play a role in the regulation of cytokinesis and stimulating the proteasomal degradation of ATXN10. This is Aurora kinase B (AURKB) from Homo sapiens (Human).